A 265-amino-acid chain; its full sequence is Beta-lactamase OXA-48 (265 aa).

The signal sequence occupies residues 1–22; sequence MRVLALSAVFLVASIIGMPAVA. The Acyl-ester intermediate role is filled by Ser70. 4 residues coordinate a beta-lactam: Ser70, Lys73, Ser118, and Arg250. Lys73 is subject to N6-carboxylysine.

It belongs to the class-D beta-lactamase family. In terms of assembly, monomer. Dimer. Post-translationally, carboxylated on the epsilon-amino group of a lysine, with the resulting carbamate functional group serving as a general base. Probably N-carboxylated at Lys-73 at neutral pH in vivo and undergoes complete N-decarboxylation, at pH 4.1, in vitro.

It catalyses the reaction a beta-lactam + H2O = a substituted beta-amino acid. With respect to regulation, inhibited by avibactam, related diazabicyclooctane (DBO) derivatives and by bicyclic boronic acids, via a covalent binding to Ser-70. Inhibited by chloride, bromide and iodide ions. Not inhibited by the beta-lactamase-blocking agents, clavulanic acid or tazobactam. Functionally, class D beta-lactamase which confers resistance to the beta-lactam antibiotics, including amoxicillin, and moderate resistance to cephalosporins and carbapenems such as cephalothin and imipenem; in the DH10B strain of E.coli. Acts via hydrolysis of the beta-lactam ring. Has oxacillin-, cephalothin- and imipenem-hydrolyzing activities. In Klebsiella pneumoniae, this protein is Beta-lactamase OXA-48.